We begin with the raw amino-acid sequence, 363 residues long: MTIYNFSAGPAVLPKPVLVKAQSELLNYQGSSMSVLEVSHRSKEFDDIIKGAERYLRDLMGIPDNYKVIFLQGGASLQFSMIPLNIARGRKAYYHVAGSWGKKAYTEAVKLSKTIPFEPILLASSEESVYDYIPEFDEKEIDPEAAYVHVTTNNTIEGTSLYDIPKTNGVPVIADMSSNILAVKYKVEDFAMIYAGAQKNIGPAGVTVVIIREDMINEEPTLSSMLDYKIQSDASSLYNTPPAYSIYIAKLVFEWVKSLGGVDAMEKANREKSGLLYDYIDSSEFYSNPVRDKKSRSLCNIPFITINKDLDEKFVKEATERGFKNIKGHRSVGGMRASLYNAFPKQGVIELIDFMKTFEAENA.

Arginine 41 serves as a coordination point for L-glutamate. Pyridoxal 5'-phosphate-binding positions include 75–76 (AS), tryptophan 100, threonine 155, aspartate 175, and glutamine 198. Residue lysine 199 is modified to N6-(pyridoxal phosphate)lysine. 239–240 (NT) serves as a coordination point for pyridoxal 5'-phosphate.

The protein belongs to the class-V pyridoxal-phosphate-dependent aminotransferase family. SerC subfamily. In terms of assembly, homodimer. Pyridoxal 5'-phosphate serves as cofactor.

Its subcellular location is the cytoplasm. The catalysed reaction is O-phospho-L-serine + 2-oxoglutarate = 3-phosphooxypyruvate + L-glutamate. The enzyme catalyses 4-(phosphooxy)-L-threonine + 2-oxoglutarate = (R)-3-hydroxy-2-oxo-4-phosphooxybutanoate + L-glutamate. It participates in amino-acid biosynthesis; L-serine biosynthesis; L-serine from 3-phospho-D-glycerate: step 2/3. Functionally, catalyzes the reversible conversion of 3-phosphohydroxypyruvate to phosphoserine and of 3-hydroxy-2-oxo-4-phosphonooxybutanoate to phosphohydroxythreonine. This chain is Phosphoserine aminotransferase, found in Streptococcus agalactiae serotype III (strain NEM316).